Here is a 650-residue protein sequence, read N- to C-terminus: Threonine--tRNA ligase (650 aa).

Residues 1-61 (MIKITFPDGA…DEDGTLEIVM (61 aa)) enclose the TGS domain. The catalytic stretch occupies residues 242–540 (DHRKLGKELD…LIETYKGAFP (299 aa)). Residues Cys-336, His-387, and His-517 each coordinate Zn(2+).

The protein belongs to the class-II aminoacyl-tRNA synthetase family. As to quaternary structure, homodimer. Requires Zn(2+) as cofactor.

Its subcellular location is the cytoplasm. It carries out the reaction tRNA(Thr) + L-threonine + ATP = L-threonyl-tRNA(Thr) + AMP + diphosphate + H(+). In terms of biological role, catalyzes the attachment of threonine to tRNA(Thr) in a two-step reaction: L-threonine is first activated by ATP to form Thr-AMP and then transferred to the acceptor end of tRNA(Thr). Also edits incorrectly charged L-seryl-tRNA(Thr). The sequence is that of Threonine--tRNA ligase from Streptococcus suis (strain 98HAH33).